The primary structure comprises 1153 residues: uncharacterized protein (1153 aa).

Positions methionine 1–glycine 18 are cleaved as a signal peptide. Cysteine 19 is lipidated: N-palmitoyl cysteine. A lipid anchor (S-diacylglycerol cysteine) is attached at cysteine 19. Helical transmembrane passes span valine 289–isoleucine 309, leucine 393–phenylalanine 413, alanine 422–phenylalanine 442, and isoleucine 457–isoleucine 477.

Belongs to the TrbL/VirB6 family.

It localises to the cell membrane. This is an uncharacterized protein from Rickettsia conorii (strain ATCC VR-613 / Malish 7).